Reading from the N-terminus, the 196-residue chain is Large ribosomal subunit protein bL9c (196 aa).

The N-terminal 41 residues, Met-1–Ala-41, are a transit peptide targeting the chloroplast.

In terms of assembly, component of the chloroplast large ribosomal subunit (LSU). Mature 70S chloroplast ribosomes of higher plants consist of a small (30S) and a large (50S) subunit. The 30S small subunit contains 1 molecule of ribosomal RNA (16S rRNA) and 24 different proteins. The 50S large subunit contains 3 rRNA molecules (23S, 5S and 4.5S rRNA) and 33 different proteins.

It is found in the plastid. The protein localises to the chloroplast. Component of the chloroplast ribosome (chloro-ribosome), a dedicated translation machinery responsible for the synthesis of chloroplast genome-encoded proteins, including proteins of the transcription and translation machinery and components of the photosynthetic apparatus. The protein is Large ribosomal subunit protein bL9c (RPL9) of Spinacia oleracea (Spinach).